The primary structure comprises 220 residues: MNVQIEESWKTHLEPEFEKDYFRTLTEFVRSEYSQYQIFPPGKLIFNAFNLCPFDKVKVVIIGQDPYHGPGQAHGLCFSVNDGVAFPPSLVNIFKEIKEDIGTPAPSTGNLTRWAEQGVLLLNATLTVRAHQAGSHQRRGWEEFTDAAIRVLAEERENLVFILWGSYAQKKGAFIDRNKHLVLSSAHPSPLSAYNGFFGNKHFSKTNEYLKAHGKTEINW.

Residue aspartate 65 is the Proton acceptor of the active site.

This sequence belongs to the uracil-DNA glycosylase (UDG) superfamily. UNG family.

The protein resides in the cytoplasm. The enzyme catalyses Hydrolyzes single-stranded DNA or mismatched double-stranded DNA and polynucleotides, releasing free uracil.. Excises uracil residues from the DNA which can arise as a result of misincorporation of dUMP residues by DNA polymerase or due to deamination of cytosine. This is Uracil-DNA glycosylase 2 from Bacteroides fragilis (strain ATCC 25285 / DSM 2151 / CCUG 4856 / JCM 11019 / LMG 10263 / NCTC 9343 / Onslow / VPI 2553 / EN-2).